The primary structure comprises 265 residues: Undecaprenyl-diphosphatase (265 aa).

The next 7 helical transmembrane spans lie at 41–61 (IAYT…LIYF), 75–95 (LKFL…LYVI), 104–124 (YNPS…GIYI), 137–157 (LSTK…LPGV), 180–200 (YSYL…LLFT), 215–235 (GIAL…GFLL), and 244–264 (YLID…GLII).

It belongs to the UppP family.

Its subcellular location is the cell membrane. It carries out the reaction di-trans,octa-cis-undecaprenyl diphosphate + H2O = di-trans,octa-cis-undecaprenyl phosphate + phosphate + H(+). Catalyzes the dephosphorylation of undecaprenyl diphosphate (UPP). The sequence is that of Undecaprenyl-diphosphatase from Saccharolobus islandicus (strain Y.G.57.14 / Yellowstone #1) (Sulfolobus islandicus).